Consider the following 37-residue polypeptide: Large ribosomal subunit protein bL36 (37 aa).

The protein belongs to the bacterial ribosomal protein bL36 family.

This is Large ribosomal subunit protein bL36 from Alkalilimnicola ehrlichii (strain ATCC BAA-1101 / DSM 17681 / MLHE-1).